Consider the following 140-residue polypeptide: Cysteine desulfuration protein SufE (140 aa).

The Cysteine persulfide intermediate role is filled by cysteine 51.

The protein belongs to the SufE family. As to quaternary structure, homodimer. Interacts with SufS.

It localises to the cytoplasm. It participates in cofactor biosynthesis; iron-sulfur cluster biosynthesis. Its function is as follows. Participates in cysteine desulfuration mediated by SufS. Cysteine desulfuration mobilizes sulfur from L-cysteine to yield L-alanine and constitutes an essential step in sulfur metabolism for biosynthesis of a variety of sulfur-containing biomolecules. Functions as a sulfur acceptor for SufS, by mediating the direct transfer of the sulfur atom from the S-sulfanylcysteine of SufS, an intermediate product of cysteine desulfuration process. This chain is Cysteine desulfuration protein SufE, found in Yersinia pseudotuberculosis serotype O:1b (strain IP 31758).